Here is a 370-residue protein sequence, read N- to C-terminus: SQLTITDSEVGSSKIYCEVRRGESLWIKEIPDCKGDIVHPTVILTQTSSEEITSSRFATVVCSIIDFHPEAITVNWLKDGHPMESGFVTSPACETNGNFSATSRLTVPAREWFTNTVYTCQVSHQAATQSRNITGSPDSSECNHPAIKLLPPSIEQVLLEATVTLTCVVSNAPYGVNVSWTQEQKPLKSEIAVQPGEDPDSVISTVDISTQAWLSEAVFYCVVSHQDLPTPLRDSIHKEAWKDLREPSVSVLLPPAEEISAERFLSLTCLVRGFSPREIFVKWTVNDKSVNPGNYKNTEVMAENDKSSFFIYSLLSIAAEEWASGASYSCVVGHEAIPLKIINRTVNKSSGKPSFVNISLALLDTVNSCQ.

3 Ig-like domains span residues 40 to 134, 145 to 237, and 247 to 347; these read PTVI…RNIT, PAIK…DSIH, and PSVS…RTVN. Asparagine 98, asparagine 132, asparagine 177, asparagine 343, asparagine 347, and asparagine 357 each carry an N-linked (GlcNAc...) asparagine glycan.

The protein is Ig heavy chain C region of Heterodontus francisci (Horn shark).